The primary structure comprises 332 residues: Biotin synthase (332 aa).

The Radical SAM core domain maps to 51 to 279 (YKVQLASLLS…LSRVRLSAGR (229 aa)). [4Fe-4S] cluster contacts are provided by cysteine 66, cysteine 70, and cysteine 73. 4 residues coordinate [2Fe-2S] cluster: cysteine 110, cysteine 142, cysteine 202, and arginine 274.

Belongs to the radical SAM superfamily. Biotin synthase family. Homodimer. Requires [4Fe-4S] cluster as cofactor. [2Fe-2S] cluster serves as cofactor.

The enzyme catalyses (4R,5S)-dethiobiotin + (sulfur carrier)-SH + 2 reduced [2Fe-2S]-[ferredoxin] + 2 S-adenosyl-L-methionine = (sulfur carrier)-H + biotin + 2 5'-deoxyadenosine + 2 L-methionine + 2 oxidized [2Fe-2S]-[ferredoxin]. It functions in the pathway cofactor biosynthesis; biotin biosynthesis; biotin from 7,8-diaminononanoate: step 2/2. Functionally, catalyzes the conversion of dethiobiotin (DTB) to biotin by the insertion of a sulfur atom into dethiobiotin via a radical-based mechanism. The chain is Biotin synthase from Prochlorococcus marinus (strain MIT 9211).